The following is a 221-amino-acid chain: 7-cyano-7-deazaguanine synthase (221 aa).

8–18 (LSGGMDSAAVI) lines the ATP pocket. Residues C186, C196, C199, and C202 each coordinate Zn(2+).

It belongs to the QueC family. The cofactor is Zn(2+).

It catalyses the reaction 7-carboxy-7-deazaguanine + NH4(+) + ATP = 7-cyano-7-deazaguanine + ADP + phosphate + H2O + H(+). The protein operates within purine metabolism; 7-cyano-7-deazaguanine biosynthesis. In terms of biological role, catalyzes the ATP-dependent conversion of 7-carboxy-7-deazaguanine (CDG) to 7-cyano-7-deazaguanine (preQ(0)). The sequence is that of 7-cyano-7-deazaguanine synthase from Stenotrophomonas maltophilia (strain K279a).